Here is an 897-residue protein sequence, read N- to C-terminus: Alanine--tRNA ligase (897 aa).

The Zn(2+) site is built by His581, His585, Cys684, and His688.

The protein belongs to the class-II aminoacyl-tRNA synthetase family. Zn(2+) is required as a cofactor.

The protein resides in the cytoplasm. It catalyses the reaction tRNA(Ala) + L-alanine + ATP = L-alanyl-tRNA(Ala) + AMP + diphosphate. In terms of biological role, catalyzes the attachment of alanine to tRNA(Ala) in a two-step reaction: alanine is first activated by ATP to form Ala-AMP and then transferred to the acceptor end of tRNA(Ala). Also edits incorrectly charged Ser-tRNA(Ala) and Gly-tRNA(Ala) via its editing domain. This is Alanine--tRNA ligase from Mycobacterium sp. (strain KMS).